The primary structure comprises 166 residues: Ureidoglycolate lyase (166 aa).

This sequence belongs to the ureidoglycolate lyase family. As to quaternary structure, homodimer. It depends on Ni(2+) as a cofactor.

It catalyses the reaction (S)-ureidoglycolate = urea + glyoxylate. It functions in the pathway nitrogen metabolism; (S)-allantoin degradation. Functionally, catalyzes the catabolism of the allantoin degradation intermediate (S)-ureidoglycolate, generating urea and glyoxylate. Involved in the utilization of allantoin as nitrogen source. This is Ureidoglycolate lyase from Agrobacterium fabrum (strain C58 / ATCC 33970) (Agrobacterium tumefaciens (strain C58)).